Reading from the N-terminus, the 118-residue chain is MAVVGVGVDVVDVDRFAATLSRTPGIAMRLFTPAERGLARPERLAARFAAKEAVAKVLGAPPGLEWHDAEVVLATGGRPSLRIRGTVAAAAQRLDIASWHLSLTHDGGVAIAMVVAES.

Mg(2+) contacts are provided by Asp-9 and Glu-52.

The protein belongs to the P-Pant transferase superfamily. AcpS family. Mg(2+) is required as a cofactor.

It is found in the cytoplasm. It catalyses the reaction apo-[ACP] + CoA = holo-[ACP] + adenosine 3',5'-bisphosphate + H(+). Its function is as follows. Transfers the 4'-phosphopantetheine moiety from coenzyme A to a Ser of acyl-carrier-protein. The protein is Holo-[acyl-carrier-protein] synthase of Frankia alni (strain DSM 45986 / CECT 9034 / ACN14a).